A 338-amino-acid chain; its full sequence is Probable 1-aminocyclopropane-1-carboxylate deaminase (338 aa).

Lys51 is subject to N6-(pyridoxal phosphate)lysine. The Nucleophile role is filled by Ser78.

The protein belongs to the ACC deaminase/D-cysteine desulfhydrase family. Pyridoxal 5'-phosphate is required as a cofactor.

The catalysed reaction is 1-aminocyclopropane-1-carboxylate + H2O = 2-oxobutanoate + NH4(+). Its function is as follows. Catalyzes a cyclopropane ring-opening reaction, the irreversible conversion of 1-aminocyclopropane-1-carboxylate (ACC) to ammonia and alpha-ketobutyrate. This chain is Probable 1-aminocyclopropane-1-carboxylate deaminase, found in Schizosaccharomyces pombe (strain 972 / ATCC 24843) (Fission yeast).